A 559-amino-acid chain; its full sequence is CTP synthase (559 aa).

An amidoligase domain region spans residues 1 to 270 (MTKFVFVTGG…DGLICDKLRL (270 aa)). Serine 13 lines the CTP pocket. Serine 13 is a UTP binding site. Residues 14–19 (SLGKGI) and aspartate 71 contribute to the ATP site. Aspartate 71 and glutamate 144 together coordinate Mg(2+). Residues 151–153 (DIE), 191–196 (KTKPTQ), and lysine 227 each bind CTP. Residues 191-196 (KTKPTQ) and lysine 227 contribute to the UTP site. Positions 295 to 548 (TIAMVGKYVD…IKAAIDHQKS (254 aa)) constitute a Glutamine amidotransferase type-1 domain. Position 357 (glycine 357) interacts with L-glutamine. Catalysis depends on cysteine 384, which acts as the Nucleophile; for glutamine hydrolysis. L-glutamine contacts are provided by residues 385-388 (LGMQ), glutamate 408, and arginine 474. Active-site residues include histidine 521 and glutamate 523.

The protein belongs to the CTP synthase family. As to quaternary structure, homotetramer.

It catalyses the reaction UTP + L-glutamine + ATP + H2O = CTP + L-glutamate + ADP + phosphate + 2 H(+). It carries out the reaction L-glutamine + H2O = L-glutamate + NH4(+). The enzyme catalyses UTP + NH4(+) + ATP = CTP + ADP + phosphate + 2 H(+). The protein operates within pyrimidine metabolism; CTP biosynthesis via de novo pathway; CTP from UDP: step 2/2. Allosterically activated by GTP, when glutamine is the substrate; GTP has no effect on the reaction when ammonia is the substrate. The allosteric effector GTP functions by stabilizing the protein conformation that binds the tetrahedral intermediate(s) formed during glutamine hydrolysis. Inhibited by the product CTP, via allosteric rather than competitive inhibition. In terms of biological role, catalyzes the ATP-dependent amination of UTP to CTP with either L-glutamine or ammonia as the source of nitrogen. Regulates intracellular CTP levels through interactions with the four ribonucleotide triphosphates. This chain is CTP synthase, found in Paracidovorax citrulli (strain AAC00-1) (Acidovorax citrulli).